The sequence spans 147 residues: Ribosomal RNA large subunit methyltransferase H (147 aa).

Residues Leu-66, Gly-95, and 114–119 (LSELTF) each bind S-adenosyl-L-methionine.

This sequence belongs to the RNA methyltransferase RlmH family. In terms of assembly, homodimer.

The protein localises to the cytoplasm. It catalyses the reaction pseudouridine(1915) in 23S rRNA + S-adenosyl-L-methionine = N(3)-methylpseudouridine(1915) in 23S rRNA + S-adenosyl-L-homocysteine + H(+). In terms of biological role, specifically methylates the pseudouridine at position 1915 (m3Psi1915) in 23S rRNA. This Synechococcus sp. (strain RCC307) protein is Ribosomal RNA large subunit methyltransferase H.